Here is a 601-residue protein sequence, read N- to C-terminus: Elongation factor 4 (601 aa).

The 183-residue stretch at 6–188 (QFIRNFSIIA…AITKEIPAPK (183 aa)) folds into the tr-type G domain. Residues 18–23 (DHGKST) and 135–138 (NKID) each bind GTP.

It belongs to the TRAFAC class translation factor GTPase superfamily. Classic translation factor GTPase family. LepA subfamily.

It localises to the cell inner membrane. The catalysed reaction is GTP + H2O = GDP + phosphate + H(+). Functionally, required for accurate and efficient protein synthesis under certain stress conditions. May act as a fidelity factor of the translation reaction, by catalyzing a one-codon backward translocation of tRNAs on improperly translocated ribosomes. Back-translocation proceeds from a post-translocation (POST) complex to a pre-translocation (PRE) complex, thus giving elongation factor G a second chance to translocate the tRNAs correctly. Binds to ribosomes in a GTP-dependent manner. The sequence is that of Elongation factor 4 from Leptospira borgpetersenii serovar Hardjo-bovis (strain JB197).